The sequence spans 562 residues: Furostanol glycoside 26-O-beta-glucosidase (562 aa).

Residues 1–44 constitute a chloroplast transit peptide; that stretch reads MAAQLGLPLVSCHRGASQAASSSAHLVPGASAIMQAGNRRQKMR. Residues Gln110, His214, and 259–260 contribute to the a beta-D-glucoside site; that span reads NE. Glu260 serves as the catalytic Proton donor. Cys279 and Cys285 are oxidised to a cystine. A beta-D-glucoside is bound by residues Tyr401, Glu472, Trp518, 525-526, and Phe534; that span reads EW. Catalysis depends on Glu472, which acts as the Nucleophile.

Belongs to the glycosyl hydrolase 1 family. In terms of assembly, heterodimer. The N-terminus of the larger subunit is blocked and the smaller subunit might be derived from the larger one.

The protein resides in the plastid. It localises to the chloroplast. It catalyses the reaction protodioscin + H2O = 26-deglucoprotodioscin + D-glucose. Partially inhibited by glucono-1,5-lactone, conduritol beta-epoxide and diosgenin, but not by beta-sitosterol or cholesterol. Functionally, beta-glucosidase involved in saponin metabolism. Highly specific for the cleavage of C-26-bound glucose moiety of furostanol glycosides such as protogracillin and protodioscin. No activity with nuatigenin glycoside. Convers furostanol glycosides to spirostanol glycosides. The protein is Furostanol glycoside 26-O-beta-glucosidase of Hellenia speciosa (Crepe ginger).